Reading from the N-terminus, the 168-residue chain is ATP synthase subunit d, mitochondrial (168 aa).

The protein belongs to the ATPase d subunit family. In terms of assembly, F-type ATPases have 2 components, CF(1) - the catalytic core - and CF(0) - the membrane proton channel. CF(0) seems to have nine subunits: a, b, c, d, e, f, g, F6 and 8 (or A6L).

The protein localises to the mitochondrion. The protein resides in the mitochondrion inner membrane. Mitochondrial membrane ATP synthase (F(1)F(0) ATP synthase or Complex V) produces ATP from ADP in the presence of a proton gradient across the membrane which is generated by electron transport complexes of the respiratory chain. F-type ATPases consist of two structural domains, F(1) - containing the extramembraneous catalytic core, and F(0) - containing the membrane proton channel, linked together by a central stalk and a peripheral stalk. During catalysis, ATP synthesis in the catalytic domain of F(1) is coupled via a rotary mechanism of the central stalk subunits to proton translocation. Part of the complex F(0) domain and the peripheric stalk, which acts as a stator to hold the catalytic alpha(3)beta(3) subcomplex and subunit a/ATP6 static relative to the rotary elements. The chain is ATP synthase subunit d, mitochondrial from Arabidopsis thaliana (Mouse-ear cress).